The chain runs to 217 residues: Sentrin-specific protease 8 (217 aa).

M1 carries the post-translational modification N-acetylmethionine. The interval 11–174 is protease; that stretch reads SLLRQSDVSL…MYVICNTEAL (164 aa). Residues H102 and D119 contribute to the active site. C163 (nucleophile) is an active-site residue.

It belongs to the peptidase C48 family.

In terms of biological role, protease that catalyzes two essential functions in the NEDD8 pathway: processing of full-length NEDD8 to its mature form and deconjugation of NEDD8 from targeted proteins such as cullins or p53. The protein is Sentrin-specific protease 8 (Senp8) of Rattus norvegicus (Rat).